The primary structure comprises 743 residues: Probable TonB-dependent receptor BfrD (743 aa).

Positions 1-30 are cleaved as a signal peptide; the sequence is MKFYSSHPMPESLAAAIAVPLLGLLPAAQA. One can recognise a TBDR plug domain in the interval 62–168; sequence PLADTPRTVQ…AGGSINLVTK (107 aa). One can recognise a TBDR beta-barrel domain in the interval 173-743; it reads QDFTEVQAGI…SAMLTFKLSY (571 aa). The TonB C-terminal box signature appears at 726-743; the sequence is YAALGPGRSAMLTFKLSY.

This sequence belongs to the TonB-dependent receptor family.

It localises to the cell outer membrane. In terms of biological role, probably involved in iron transport. The chain is Probable TonB-dependent receptor BfrD (bfrD) from Bordetella pertussis (strain Tohama I / ATCC BAA-589 / NCTC 13251).